An 83-amino-acid polypeptide reads, in one-letter code: Retinal cone rhodopsin-sensitive cGMP 3',5'-cyclic phosphodiesterase subunit gamma (83 aa).

Low complexity predominate over residues M1–P19. The tract at residues M1–P51 is disordered. The span at G22 to V43 shows a compositional bias: basic residues.

This sequence belongs to the rod/cone cGMP-PDE gamma subunit family. In terms of assembly, tetramer composed of two catalytic chains (alpha and beta), and two inhibitory chains (gamma).

The catalysed reaction is 3',5'-cyclic GMP + H2O = GMP + H(+). Participates in processes of transmission and amplification of the visual signal. cGMP-PDEs are the effector molecules in G-protein-mediated phototransduction in vertebrate rods and cones. In Ictidomys tridecemlineatus (Thirteen-lined ground squirrel), this protein is Retinal cone rhodopsin-sensitive cGMP 3',5'-cyclic phosphodiesterase subunit gamma (PDE6H).